Consider the following 988-residue polypeptide: Chitin synthase 1 (988 aa).

The segment at 29 to 75 is disordered; that stretch reads QHHWPPSSGSSLGRAPSIPLSSSNPRSPIRPSTPSRVSTDWTRPPAP. The span at 44–66 shows a compositional bias: low complexity; the sequence is PSIPLSSSNPRSPIRPSTPSRVS. 7 consecutive transmembrane segments (helical) span residues 577–596, 616–636, 656–676, 732–752, 764–784, 864–884, and 911–931; these read WLNG…KQIW, FISL…FYFV, IFVI…ILSL, IFTN…LMSF, SAQY…YAFC, YVVA…SEAY, and AIGS…EGRI. The interval 950 to 988 is disordered; sequence AGLGSGFSESGKTGITSGSGMSGMSLSDVTSKISEKLAG. Residues 957-976 are compositionally biased toward low complexity; sequence SESGKTGITSGSGMSGMSLS.

This sequence belongs to the chitin synthase family. Class II subfamily.

It localises to the cell membrane. The catalysed reaction is [(1-&gt;4)-N-acetyl-beta-D-glucosaminyl](n) + UDP-N-acetyl-alpha-D-glucosamine = [(1-&gt;4)-N-acetyl-beta-D-glucosaminyl](n+1) + UDP + H(+). Its function is as follows. Polymerizes chitin, a structural polymer of the cell wall and septum, by transferring the sugar moiety of UDP-GlcNAc to the non-reducing end of the growing chitin polymer. CHS1 mainly responsible for normal yeast cell reproductive growth. This is Chitin synthase 1 from Exophiala dermatitidis (Black yeast-like fungus).